The chain runs to 301 residues: Nucleotide-binding protein Helmi_06460 (301 aa).

17–24 (GLSGAGKS) is an ATP binding site. Residue 68–71 (DIRG) participates in GTP binding.

It belongs to the RapZ-like family.

Displays ATPase and GTPase activities. The polypeptide is Nucleotide-binding protein Helmi_06460 (Heliobacterium modesticaldum (strain ATCC 51547 / Ice1)).